A 572-amino-acid chain; its full sequence is Flagellin B (572 aa).

It belongs to the bacterial flagellin family. Heteromer of flaA and flaB.

The protein localises to the secreted. The protein resides in the bacterial flagellum. Functionally, flagellin is the subunit protein which polymerizes to form the filaments of bacterial flagella. In Campylobacter jejuni subsp. jejuni serotype O:2 (strain ATCC 700819 / NCTC 11168), this protein is Flagellin B (flaB).